A 251-amino-acid chain; its full sequence is tRNA (guanine-N(7)-)-methyltransferase (251 aa).

4 residues coordinate S-adenosyl-L-methionine: glutamate 80, glutamate 105, aspartate 132, and aspartate 155. Aspartate 155 is an active-site residue. Residues lysine 159, aspartate 191, and 228-231 (TKFE) contribute to the substrate site.

This sequence belongs to the class I-like SAM-binding methyltransferase superfamily. TrmB family.

It catalyses the reaction guanosine(46) in tRNA + S-adenosyl-L-methionine = N(7)-methylguanosine(46) in tRNA + S-adenosyl-L-homocysteine. The protein operates within tRNA modification; N(7)-methylguanine-tRNA biosynthesis. Catalyzes the formation of N(7)-methylguanine at position 46 (m7G46) in tRNA. The polypeptide is tRNA (guanine-N(7)-)-methyltransferase (Histophilus somni (strain 2336) (Haemophilus somnus)).